A 1276-amino-acid polypeptide reads, in one-letter code: Receptor-type guanylate cyclase gcy-28 (1276 aa).

Residues 1–18 (MLRWLTLLSCILLTALHG) form the signal peptide. The Extracellular portion of the chain corresponds to 19-515 (NIVEDVGAAQ…KSKCPGYPLH (497 aa)). N-linked (GlcNAc...) asparagine glycans are attached at residues Asn-87, Asn-196, Asn-338, Asn-384, Asn-387, Asn-414, Asn-428, and Asn-444. Residues 516–536 (VYLLMGSFLLILVLVGLFIFF) traverse the membrane as a helical segment. Topologically, residues 537–1276 (WRRYKLEQEL…EIPDFGEEFA (740 aa)) are cytoplasmic. Disordered stretches follow at residues 562-601 (ESQKKNEKKKAKKRKNHNDYLPESDPLLRSTSRSSVNSDK) and 635-709 (IFTR…KKSL). Residues 567-577 (NEKKKAKKRKN) show a composition bias toward basic residues. Polar residues-rich tracts occupy residues 590 to 599 (RSTSRSSVNS) and 642 to 660 (TPPSESQKNGGLTPNSLQK). The Protein kinase domain maps to 717–1013 (SFGMVSFKSG…SSVRKAVRSL (297 aa)). Residues 723–731 (FKSGSGGSV) and Lys-756 contribute to the ATP site. Residues 1017–1063 (NETSNLVDNLLKRMEQYANNLEGLVEERTQEYLAEKKKVEELLHQLL) are a coiled coil. The Guanylate cyclase domain maps to 1086-1215 (TIYFSDIVGF…DTVNTSSRME (130 aa)). Residues Asp-1091, Ile-1092, and Asp-1135 each contribute to the Mg(2+) site.

The protein belongs to the adenylyl cyclase class-4/guanylyl cyclase family. As to expression, expressed in head neurons, ventral cord and tail neurons, body wall muscle, hypodermis, somatic gonad and intestine. Isoform d is expressed specifically in AIA interneurons.

It localises to the cell membrane. Its subcellular location is the cell projection. The protein resides in the dendrite. The protein localises to the axon. It is found in the perikaryon. The catalysed reaction is GTP = 3',5'-cyclic GMP + diphosphate. Its function is as follows. Guanylate cyclase involved in the production of the second messenger cGMP. Regulates olfactory perception in AWC sensory neurons although may not be involved in the primary sensory transduction steps. Functionally, isoforms c: Regulates sensory integration of conflicting sensory cues in AIA interneurons. In terms of biological role, regulates sensory integration of conflicting sensory cues in AIA interneurons. This chain is Receptor-type guanylate cyclase gcy-28, found in Caenorhabditis elegans.